Consider the following 160-residue polypeptide: MAKQKKHPTGTIAQNKKARHDYFIEHKFEAGLVLSGWEVKSLRAGKAHLTDSYVLLKDGEAWLFGSHITPLTTASTHVIADPTRTRKLLLNKRELERVEAAVAQKGYTCVALALYWSKHLIKCEIALGKGKKEFDKRDTMRERDSNRELQRAVRNKGKEE.

The interval 132–160 (KEFDKRDTMRERDSNRELQRAVRNKGKEE) is disordered.

The protein belongs to the SmpB family.

It is found in the cytoplasm. Its function is as follows. Required for rescue of stalled ribosomes mediated by trans-translation. Binds to transfer-messenger RNA (tmRNA), required for stable association of tmRNA with ribosomes. tmRNA and SmpB together mimic tRNA shape, replacing the anticodon stem-loop with SmpB. tmRNA is encoded by the ssrA gene; the 2 termini fold to resemble tRNA(Ala) and it encodes a 'tag peptide', a short internal open reading frame. During trans-translation Ala-aminoacylated tmRNA acts like a tRNA, entering the A-site of stalled ribosomes, displacing the stalled mRNA. The ribosome then switches to translate the ORF on the tmRNA; the nascent peptide is terminated with the 'tag peptide' encoded by the tmRNA and targeted for degradation. The ribosome is freed to recommence translation, which seems to be the essential function of trans-translation. This Pseudomonas putida (strain ATCC 47054 / DSM 6125 / CFBP 8728 / NCIMB 11950 / KT2440) protein is SsrA-binding protein.